Here is a 116-residue protein sequence, read N- to C-terminus: Large ribosomal subunit protein bL19 (116 aa).

It belongs to the bacterial ribosomal protein bL19 family.

In terms of biological role, this protein is located at the 30S-50S ribosomal subunit interface and may play a role in the structure and function of the aminoacyl-tRNA binding site. This chain is Large ribosomal subunit protein bL19, found in Staphylococcus epidermidis (strain ATCC 35984 / DSM 28319 / BCRC 17069 / CCUG 31568 / BM 3577 / RP62A).